A 242-amino-acid polypeptide reads, in one-letter code: 1-(5-phosphoribosyl)-5-[(5-phosphoribosylamino)methylideneamino] imidazole-4-carboxamide isomerase (242 aa).

Residue Asp8 is the Proton acceptor of the active site. Asp129 (proton donor) is an active-site residue.

This sequence belongs to the HisA/HisF family.

The protein resides in the cytoplasm. The catalysed reaction is 1-(5-phospho-beta-D-ribosyl)-5-[(5-phospho-beta-D-ribosylamino)methylideneamino]imidazole-4-carboxamide = 5-[(5-phospho-1-deoxy-D-ribulos-1-ylimino)methylamino]-1-(5-phospho-beta-D-ribosyl)imidazole-4-carboxamide. The protein operates within amino-acid biosynthesis; L-histidine biosynthesis; L-histidine from 5-phospho-alpha-D-ribose 1-diphosphate: step 4/9. The polypeptide is 1-(5-phosphoribosyl)-5-[(5-phosphoribosylamino)methylideneamino] imidazole-4-carboxamide isomerase (Maridesulfovibrio salexigens (strain ATCC 14822 / DSM 2638 / NCIMB 8403 / VKM B-1763) (Desulfovibrio salexigens)).